The following is a 325-amino-acid chain: ATP phosphoribosyltransferase (325 aa).

The protein belongs to the ATP phosphoribosyltransferase family. Long subfamily. It depends on Mg(2+) as a cofactor.

Its subcellular location is the cytoplasm. The catalysed reaction is 1-(5-phospho-beta-D-ribosyl)-ATP + diphosphate = 5-phospho-alpha-D-ribose 1-diphosphate + ATP. Its pathway is amino-acid biosynthesis; L-histidine biosynthesis; L-histidine from 5-phospho-alpha-D-ribose 1-diphosphate: step 1/9. Feedback inhibited by histidine. Its function is as follows. Catalyzes the condensation of ATP and 5-phosphoribose 1-diphosphate to form N'-(5'-phosphoribosyl)-ATP (PR-ATP). Has a crucial role in the pathway because the rate of histidine biosynthesis seems to be controlled primarily by regulation of HisG enzymatic activity. In Rhodopseudomonas palustris (strain BisA53), this protein is ATP phosphoribosyltransferase.